A 213-amino-acid chain; its full sequence is Probable nicotinate-nucleotide adenylyltransferase (213 aa).

It belongs to the NadD family.

It carries out the reaction nicotinate beta-D-ribonucleotide + ATP + H(+) = deamido-NAD(+) + diphosphate. It functions in the pathway cofactor biosynthesis; NAD(+) biosynthesis; deamido-NAD(+) from nicotinate D-ribonucleotide: step 1/1. Catalyzes the reversible adenylation of nicotinate mononucleotide (NaMN) to nicotinic acid adenine dinucleotide (NaAD). This chain is Probable nicotinate-nucleotide adenylyltransferase, found in Pectobacterium atrosepticum (strain SCRI 1043 / ATCC BAA-672) (Erwinia carotovora subsp. atroseptica).